Reading from the N-terminus, the 249-residue chain is 2,3-bisphosphoglycerate-dependent phosphoglycerate mutase (249 aa).

Residues 8-15, 21-22, R60, 87-90, K98, 114-115, and 183-184 contribute to the substrate site; these read RHGESTWN, TG, ERHY, RR, and GN. Catalysis depends on H9, which acts as the Tele-phosphohistidine intermediate. E87 (proton donor/acceptor) is an active-site residue.

The protein belongs to the phosphoglycerate mutase family. BPG-dependent PGAM subfamily. In terms of assembly, homodimer.

It catalyses the reaction (2R)-2-phosphoglycerate = (2R)-3-phosphoglycerate. It participates in carbohydrate degradation; glycolysis; pyruvate from D-glyceraldehyde 3-phosphate: step 3/5. Functionally, catalyzes the interconversion of 2-phosphoglycerate and 3-phosphoglycerate. The protein is 2,3-bisphosphoglycerate-dependent phosphoglycerate mutase of Azoarcus sp. (strain BH72).